The primary structure comprises 212 residues: Protein-L-isoaspartate O-methyltransferase (212 aa).

Residue S60 is part of the active site.

It belongs to the methyltransferase superfamily. L-isoaspartyl/D-aspartyl protein methyltransferase family.

It is found in the cytoplasm. It carries out the reaction [protein]-L-isoaspartate + S-adenosyl-L-methionine = [protein]-L-isoaspartate alpha-methyl ester + S-adenosyl-L-homocysteine. Catalyzes the methyl esterification of L-isoaspartyl residues in peptides and proteins that result from spontaneous decomposition of normal L-aspartyl and L-asparaginyl residues. It plays a role in the repair and/or degradation of damaged proteins. In Methanococcus maripaludis (strain C5 / ATCC BAA-1333), this protein is Protein-L-isoaspartate O-methyltransferase.